The primary structure comprises 582 residues: Regulatory solute carrier protein family 1 member 1 (582 aa).

Disordered stretches follow at residues 1–32 (MSSL…ARSV), 56–76 (KASA…LQVL), 143–180 (EKSW…VPQD), 303–325 (VDMS…HGQP), 363–384 (VTCQ…SGRR), 390–409 (LTPS…SESG), 426–452 (ASTS…ESAR), and 483–529 (SEGA…LSTP). Residues 16–32 (SGQSPEVGSPTSLARSV) are compositionally biased toward polar residues. The segment covering 148–179 (PENQTPSPVNGLQQHRETGSVQREAGQQSVPQ) has biased composition (polar residues). The span at 390 to 408 (LTPSDQYSQGSCHQATSES) shows a compositional bias: polar residues. Basic and acidic residues-rich tracts occupy residues 438–452 (SPDR…ESAR) and 490–503 (PSEH…DRPE). The 41-residue stretch at 536–576 (IFPAADVDRILGAGFTLQEALGALHRVGGNADLALLVLLAK) folds into the UBA domain.

In terms of assembly, interacts with YRDC. As to expression, expressed in epithelial and subepithelial cells of small intestine.

It localises to the cell membrane. The protein resides in the nucleus. It is found in the golgi apparatus. The protein localises to the trans-Golgi network. In terms of biological role, mediates transcriptional and post-transcriptional regulation of SLC5A1. Inhibits a dynamin and PKC-dependent exocytotic pathway of SLC5A1. Also involved in transcriptional regulation of SLC22A2. Exhibits glucose-dependent, short-term inhibition of SLC5A1 and SLC22A2 by inhibiting the release of vesicles from the trans-Golgi network. Regulates the expression of SLC5A1 in a tissue-specific manner and is specifically involved in its regulation in the small intestine. The polypeptide is Regulatory solute carrier protein family 1 member 1 (Rsc1a1) (Mus musculus (Mouse)).